A 537-amino-acid polypeptide reads, in one-letter code: Phosphoenolpyruvate carboxykinase (ATP) (537 aa).

Positions 64, 204, and 210 each coordinate substrate. ATP-binding positions include K210, H229, and 245 to 253 (GLSGTGKTT). Residues K210 and H229 each contribute to the Mn(2+) site. D266 is a binding site for Mn(2+). ATP-binding positions include E294, R330, 446 to 447 (RI), and T452. Position 330 (R330) interacts with substrate.

This sequence belongs to the phosphoenolpyruvate carboxykinase (ATP) family. As to quaternary structure, monomer. Mn(2+) serves as cofactor.

It localises to the cytoplasm. The catalysed reaction is oxaloacetate + ATP = phosphoenolpyruvate + ADP + CO2. Its pathway is carbohydrate biosynthesis; gluconeogenesis. Functionally, involved in the gluconeogenesis. Catalyzes the conversion of oxaloacetate (OAA) to phosphoenolpyruvate (PEP) through direct phosphoryl transfer between the nucleoside triphosphate and OAA. In Aliivibrio fischeri (strain ATCC 700601 / ES114) (Vibrio fischeri), this protein is Phosphoenolpyruvate carboxykinase (ATP).